Reading from the N-terminus, the 243-residue chain is Adenylate dimethylallyltransferase (243 aa).

The catalysed reaction is dimethylallyl diphosphate + AMP = N(6)-(dimethylallyl)adenosine 5'-phosphate + diphosphate. Transfers dimethylallyl groups to AMP as part of the biosynthesis of cytokinin phytohormones. The sequence is that of Adenylate dimethylallyltransferase (tzs) from Agrobacterium fabrum (strain C58 / ATCC 33970) (Agrobacterium tumefaciens (strain C58)).